Consider the following 90-residue polypeptide: uncharacterized protein (90 aa).

The signal sequence occupies residues Met1–Ser18. The segment at Gln28–Pro50 is disordered.

Its subcellular location is the secreted. This is an uncharacterized protein from Homo sapiens (Human).